The primary structure comprises 382 residues: MKYELKTTSGNARRGRLTFSRPKGEYVVETPAFMPVGTYGTVKGMTPEEVAATGAQILLGNTFHLWLRPGQEVMKSHGDLHGFMQWHGPILTDSGGFQVFSLGKLRKIKEEGVTFQNPISGEKIFLSPEKSMEIQYDLGSDIVMIFDECTPYPATFDYAKNSMEMSLRWAKRSRDRFDELQNPRALFGIVQGGTYEELRKISVEGLVNIGFDGYAVGGLAVGEPKEEMHRILEFTTPLLPQDKPRYLMGVGKPEDLVEGVRRGIDMFDCVMPTRNARNGHLFVSNGIVKIRNAKYKTDTTPLDPECDCYTCKNYTKAYLYHLDKCGEILGARLNTIHNLRYYQRLMAQIRQAIEEDRFDDFVVEFYAKIGKEVPPLQSEVNK.

Asp-93 acts as the Proton acceptor in catalysis. Residues 93–97 (DSGGF), Asp-147, Gln-191, and Gly-218 each bind substrate. The RNA binding stretch occupies residues 249-255 (GVGKPED). Asp-268 functions as the Nucleophile in the catalytic mechanism. Positions 273–277 (TRNAR) are RNA binding; important for wobble base 34 recognition. Residues Cys-306, Cys-308, Cys-311, and His-337 each coordinate Zn(2+).

Belongs to the queuine tRNA-ribosyltransferase family. In terms of assembly, homodimer. Within each dimer, one monomer is responsible for RNA recognition and catalysis, while the other monomer binds to the replacement base PreQ1. It depends on Zn(2+) as a cofactor.

The enzyme catalyses 7-aminomethyl-7-carbaguanine + guanosine(34) in tRNA = 7-aminomethyl-7-carbaguanosine(34) in tRNA + guanine. It participates in tRNA modification; tRNA-queuosine biosynthesis. Catalyzes the base-exchange of a guanine (G) residue with the queuine precursor 7-aminomethyl-7-deazaguanine (PreQ1) at position 34 (anticodon wobble position) in tRNAs with GU(N) anticodons (tRNA-Asp, -Asn, -His and -Tyr). Catalysis occurs through a double-displacement mechanism. The nucleophile active site attacks the C1' of nucleotide 34 to detach the guanine base from the RNA, forming a covalent enzyme-RNA intermediate. The proton acceptor active site deprotonates the incoming PreQ1, allowing a nucleophilic attack on the C1' of the ribose to form the product. After dissociation, two additional enzymatic reactions on the tRNA convert PreQ1 to queuine (Q), resulting in the hypermodified nucleoside queuosine (7-(((4,5-cis-dihydroxy-2-cyclopenten-1-yl)amino)methyl)-7-deazaguanosine). The protein is Queuine tRNA-ribosyltransferase of Actinobacillus pleuropneumoniae serotype 5b (strain L20).